A 417-amino-acid polypeptide reads, in one-letter code: Glutamyl-tRNA reductase (417 aa).

Residues 49–52 (TCNR), Ser-105, 110–112 (ETQ), and Gln-116 each bind substrate. The Nucleophile role is filled by Cys-50. 185-190 (GAGEMI) contacts NADP(+).

It belongs to the glutamyl-tRNA reductase family. In terms of assembly, homodimer.

The catalysed reaction is (S)-4-amino-5-oxopentanoate + tRNA(Glu) + NADP(+) = L-glutamyl-tRNA(Glu) + NADPH + H(+). It functions in the pathway porphyrin-containing compound metabolism; protoporphyrin-IX biosynthesis; 5-aminolevulinate from L-glutamyl-tRNA(Glu): step 1/2. In terms of biological role, catalyzes the NADPH-dependent reduction of glutamyl-tRNA(Glu) to glutamate 1-semialdehyde (GSA). The polypeptide is Glutamyl-tRNA reductase (Chromobacterium violaceum (strain ATCC 12472 / DSM 30191 / JCM 1249 / CCUG 213 / NBRC 12614 / NCIMB 9131 / NCTC 9757 / MK)).